The primary structure comprises 363 residues: Cytochrome b (363 aa).

A run of 4 helical transmembrane segments spans residues 23–43 (VGFI…LLTF), 67–89 (WFVR…IHII), 102–122 (SWYS…TGYV), and 164–184 (FFIL…LHLY). Heme b contacts are provided by H73 and H87. The heme b site is built by H168 and H182. Residue H187 participates in a ubiquinone binding. 4 consecutive transmembrane segments (helical) span residues 210 to 230 (ILFS…PQVG), 271 to 291 (VFPT…LLII), 309 to 329 (RVWT…GCIG), and 332 to 352 (VINL…TTFV).

Belongs to the cytochrome b family. The main subunits of complex b-c1 are: cytochrome b, cytochrome c1 and the Rieske protein. Requires heme b as cofactor.

It localises to the mitochondrion inner membrane. Its function is as follows. Component of the ubiquinol-cytochrome c reductase complex (complex III or cytochrome b-c1 complex) that is part of the mitochondrial respiratory chain. The b-c1 complex mediates electron transfer from ubiquinol to cytochrome c. Contributes to the generation of a proton gradient across the mitochondrial membrane that is then used for ATP synthesis. The sequence is that of Cytochrome b (MT-CYB) from Theileria parva (East coast fever infection agent).